Here is a 400-residue protein sequence, read N- to C-terminus: Probable succinyl-diaminopimelate desuccinylase (400 aa).

His-72 lines the Zn(2+) pocket. Asp-74 is a catalytic residue. Position 105 (Asp-105) interacts with Zn(2+). Catalysis depends on Glu-139, which acts as the Proton acceptor. Zn(2+) contacts are provided by Glu-140, Glu-165, and His-378.

Belongs to the peptidase M20A family. The cofactor is Zn(2+). Co(2+) is required as a cofactor.

The enzyme catalyses N-succinyl-(2S,6S)-2,6-diaminopimelate + H2O = (2S,6S)-2,6-diaminopimelate + succinate. Its pathway is amino-acid biosynthesis; L-lysine biosynthesis via DAP pathway; LL-2,6-diaminopimelate from (S)-tetrahydrodipicolinate (succinylase route): step 3/3. The protein is Probable succinyl-diaminopimelate desuccinylase (dapE) of Staphylococcus aureus (strain Mu50 / ATCC 700699).